The chain runs to 633 residues: Glutamyl-tRNA(Gln) amidotransferase subunit E (633 aa).

Positions 415–437 are disordered; that stretch reads LDDGTTKFLRPQPGSARMYPETD.

Belongs to the GatB/GatE family. GatE subfamily. In terms of assembly, heterodimer of GatD and GatE.

It carries out the reaction L-glutamyl-tRNA(Gln) + L-glutamine + ATP + H2O = L-glutaminyl-tRNA(Gln) + L-glutamate + ADP + phosphate + H(+). In terms of biological role, allows the formation of correctly charged Gln-tRNA(Gln) through the transamidation of misacylated Glu-tRNA(Gln) in organisms which lack glutaminyl-tRNA synthetase. The reaction takes place in the presence of glutamine and ATP through an activated gamma-phospho-Glu-tRNA(Gln). The GatDE system is specific for glutamate and does not act on aspartate. The protein is Glutamyl-tRNA(Gln) amidotransferase subunit E of Saccharolobus solfataricus (strain ATCC 35092 / DSM 1617 / JCM 11322 / P2) (Sulfolobus solfataricus).